Here is a 505-residue protein sequence, read N- to C-terminus: MTEQKYIVALDQGTTSSRAVILDHDANIVSVAQREFTQIYPEAGWVEHDPMEIWATQSSTLVEALAKTGIRSDQLAGIGITNQRETTIVWNKETGKPVYNAIVWQCRRTADICEELKARGLEDYVRDNTGLVLDPYFSGTKVKWILDNVEGAREDAEAGKLLFGTVDTWLVWKMTQGRVHVTDYTNASRTMLFNINDLCWDQKMLDEMGIPASMMPEVKRSSEIYGQTNIGGKGGTRIPIAGIAGDQQAALYGQMCVEAGQAKNTYGTGCFLLMNTGQEKVTSKNGLLTTLACGPKGEPAYALEGAVFMGGASIQWLRDEMKILAGAEDSEYFATKVDTSNGVYVVPAFTGLGAPYWDAYARGTIVGLTRGVNSNHIIRATLEGIAYQTRDVLDAMQADSGIKLANLRVDGGAVANNFLMQFQSDVLNTEVHRPQVTEVTALGAAYLAGLAVGFWNSIDELQDKAVLDRTFEPHDDEEKRNRRYKGWKRAVKCAQTWSELHDEDD.

Residue T14 participates in ADP binding. ATP-binding residues include T14, T15, and S16. T14 serves as a coordination point for sn-glycerol 3-phosphate. R18 is a binding site for ADP. R84, E85, Y136, and D246 together coordinate sn-glycerol 3-phosphate. Glycerol is bound by residues R84, E85, Y136, D246, and Q247. Residues T268 and G311 each contribute to the ADP site. ATP contacts are provided by T268, G311, Q315, and G412. ADP-binding residues include G412 and N416.

Belongs to the FGGY kinase family.

It catalyses the reaction glycerol + ATP = sn-glycerol 3-phosphate + ADP + H(+). Its pathway is polyol metabolism; glycerol degradation via glycerol kinase pathway; sn-glycerol 3-phosphate from glycerol: step 1/1. Inhibited by fructose 1,6-bisphosphate (FBP). In terms of biological role, key enzyme in the regulation of glycerol uptake and metabolism. Catalyzes the phosphorylation of glycerol to yield sn-glycerol 3-phosphate. This chain is Glycerol kinase, found in Vibrio campbellii (strain ATCC BAA-1116).